The primary structure comprises 391 residues: Multidrug resistance protein MdtL (391 aa).

The next 12 helical transmembrane spans lie at phenylalanine 4–valine 24, isoleucine 42–alanine 62, proline 69–glutamate 89, leucine 93–phenylalanine 113, leucine 131–methionine 151, serine 158–leucine 178, phenylalanine 203–valine 222, alanine 245–phenylalanine 265, threonine 269–proline 289, valine 293–methionine 313, leucine 331–isoleucine 351, and methionine 356–alanine 376.

The protein belongs to the major facilitator superfamily. DHA1 family. MdtL (TC 2.A.1.2.22) subfamily.

It is found in the cell inner membrane. In terms of biological role, confers resistance to chloramphenicol. The polypeptide is Multidrug resistance protein MdtL (Escherichia coli O127:H6 (strain E2348/69 / EPEC)).